We begin with the raw amino-acid sequence, 215 residues long: MNGIQVDINRLKKGEVSLGTSIMAVTFKDGVILGADSRTTTGAYIANRVTDKLTRVHDKIWCCRSGSAADTQAIADIVQYHLELYTSQYGTPSTETAASVFKELCYENKDNLTAGIIVAGYDDKNKGEVYTIPLGGSVHKLPYAIAGSGSTFIYGYCDKNFRENMSKEETVDFIKHSLSQAIKWDGSSGGVIRMVVLTAAGVERLIFYPDEYEQL.

At M1 the chain carries N-acetylmethionine. A propeptide spans 1-19 (MNGIQVDINRLKKGEVSLG) (removed in mature form). The Nucleophile role is filled by T20.

This sequence belongs to the peptidase T1B family. In terms of assembly, the 26S proteasome consists of a 20S proteasome core and two 19S regulatory subunits. The 20S proteasome core is composed of 28 subunits that are arranged in four stacked rings, resulting in a barrel-shaped structure. The two end rings are each formed by seven alpha subunits, and the two central rings are each formed by seven beta subunits. The catalytic chamber with the active sites is on the inside of the barrel.

It localises to the cytoplasm. It is found in the nucleus. It catalyses the reaction Cleavage of peptide bonds with very broad specificity.. Its function is as follows. The proteasome degrades poly-ubiquitinated proteins in the cytoplasm and in the nucleus. It is essential for the regulated turnover of proteins and for the removal of misfolded proteins. The proteasome is a multicatalytic proteinase complex that is characterized by its ability to cleave peptides with Arg, Phe, Tyr, Leu, and Glu adjacent to the leaving group at neutral or slightly basic pH. It has an ATP-dependent proteolytic activity. PRE3 and PRE4 are necessary for the peptidyl-glutamyl-peptide-hydrolyzing activity. In terms of biological role, this subunit is necessary for the peptidylglutamyl-peptide hydrolyzing activity. The sequence is that of Proteasome subunit beta type-1 (PRE3) from Saccharomyces cerevisiae (strain ATCC 204508 / S288c) (Baker's yeast).